The chain runs to 89 residues: UPF0367 protein PMM0124 (89 aa).

The protein belongs to the UPF0367 family.

The polypeptide is UPF0367 protein PMM0124 (Prochlorococcus marinus subsp. pastoris (strain CCMP1986 / NIES-2087 / MED4)).